Here is a 726-residue protein sequence, read N- to C-terminus: Disintegrin and metalloproteinase domain-containing protein 20 (726 aa).

The signal sequence occupies residues 1 to 31; it reads MAVGEPLVHIRVTLLLLWFGMFLSISGHSQA. A propeptide spanning residues 32–206 is cleaved from the precursor; sequence RPSQYFTSPE…SSFVGWWTHQ (175 aa). A Cysteine switch motif is present at residues 171-178; it reads MRCGLTEE. Cysteine 173 contributes to the Zn(2+) binding site. 2 N-linked (GlcNAc...) asparagine glycosylation sites follow: asparagine 191 and asparagine 226. A Peptidase M12B domain is found at 207–400; that stretch reads RFVELVVVVD…SGLCIQPPPY (194 aa). Residues 207-693 are Extracellular-facing; the sequence is RFVELVVVVD…GLNVMGKLRY (487 aa). 3 disulfide bridges follow: cysteine 317-cysteine 394, cysteine 357-cysteine 379, and cysteine 359-cysteine 364. Histidine 342 is a binding site for Zn(2+). Residue glutamate 343 is part of the active site. Histidine 346 and histidine 352 together coordinate Zn(2+). 4 N-linked (GlcNAc...) asparagine glycosylation sites follow: asparagine 378, asparagine 438, asparagine 479, and asparagine 587. The Disintegrin domain occupies 407 to 493; that stretch reads LKYCGNLVVE…QCPDDVYVQD (87 aa). Cysteine 465 and cysteine 485 form a disulfide bridge. Intrachain disulfides connect cysteine 635-cysteine 646, cysteine 640-cysteine 652, and cysteine 654-cysteine 663. The region spanning 635–663 is the EGF-like domain; it reads CQPKTCNMRGICNNKQHCHCNHEWAPPYC. A helical membrane pass occupies residues 694 to 714; the sequence is LSLLCLLPLVAFLLFCLHVLF. Topologically, residues 715-726 are cytoplasmic; sequence KKRTKSKEDEEG.

Requires Zn(2+) as cofactor. In terms of processing, has no obvious cleavage site for furin endopeptidase, suggesting that the proteolytic processing is regulated. As to expression, testis specific.

It localises to the membrane. Functionally, may be involved in sperm maturation and/or fertilization. The polypeptide is Disintegrin and metalloproteinase domain-containing protein 20 (ADAM20) (Homo sapiens (Human)).